The following is a 351-amino-acid chain: N-acetyl-gamma-glutamyl-phosphate reductase (351 aa).

C154 is an active-site residue.

Belongs to the NAGSA dehydrogenase family. Type 1 subfamily.

It is found in the cytoplasm. The catalysed reaction is N-acetyl-L-glutamate 5-semialdehyde + phosphate + NADP(+) = N-acetyl-L-glutamyl 5-phosphate + NADPH + H(+). Its pathway is amino-acid biosynthesis; L-arginine biosynthesis; N(2)-acetyl-L-ornithine from L-glutamate: step 3/4. Catalyzes the NADPH-dependent reduction of N-acetyl-5-glutamyl phosphate to yield N-acetyl-L-glutamate 5-semialdehyde. This is N-acetyl-gamma-glutamyl-phosphate reductase from Prochlorococcus marinus (strain MIT 9312).